The following is a 231-amino-acid chain: Ribonuclease 3 (231 aa).

The RNase III domain maps to 12 to 139 (LKAFLQKNNI…LIAAIYLDQG (128 aa)). Mg(2+) is bound at residue Glu-52. Asp-56 is a catalytic residue. Asp-125 and Glu-128 together coordinate Mg(2+). Glu-128 is an active-site residue. Positions 165–231 (DPKSELQEYF…AANALSKLKT (67 aa)) constitute a DRBM domain.

It belongs to the ribonuclease III family. As to quaternary structure, homodimer. It depends on Mg(2+) as a cofactor.

The protein resides in the cytoplasm. The enzyme catalyses Endonucleolytic cleavage to 5'-phosphomonoester.. Its function is as follows. Digests double-stranded RNA. Involved in the processing of primary rRNA transcript to yield the immediate precursors to the large and small rRNAs (23S and 16S). Processes some mRNAs, and tRNAs when they are encoded in the rRNA operon. Processes pre-crRNA and tracrRNA of type II CRISPR loci if present in the organism. This chain is Ribonuclease 3, found in Mycoplasmopsis synoviae (strain 53) (Mycoplasma synoviae).